The primary structure comprises 292 residues: Histamine N-methyltransferase (292 aa).

A substrate-binding site is contributed by glutamate 28. Residues glycine 60, glutamate 89, glutamine 94, serine 120, and isoleucine 142 each coordinate S-adenosyl-L-methionine. Position 283 (asparagine 283) interacts with substrate.

It belongs to the class I-like SAM-binding methyltransferase superfamily. HNMT family. As to quaternary structure, monomer. As to expression, expressed in jejunum, brain &gt; lung, spleen, stomach &gt; liver, kidney.

It is found in the cytoplasm. The catalysed reaction is histamine + S-adenosyl-L-methionine = N(tau)-methylhistamine + S-adenosyl-L-homocysteine + H(+). Functionally, inactivates histamine by N-methylation. Plays an important role in degrading histamine and in regulating the airway response to histamine. This Cavia porcellus (Guinea pig) protein is Histamine N-methyltransferase (HNMT).